The chain runs to 413 residues: Tyrosine--tRNA ligase (413 aa).

Positions Pro60 to His69 match the 'HIGH' region motif. The 'KMSKS' region signature appears at Lys244 to Ser248. Lys247 is a binding site for ATP. The S4 RNA-binding domain occupies Leu352 to Leu412.

The protein belongs to the class-I aminoacyl-tRNA synthetase family. TyrS type 2 subfamily. In terms of assembly, homodimer.

The protein resides in the cytoplasm. It catalyses the reaction tRNA(Tyr) + L-tyrosine + ATP = L-tyrosyl-tRNA(Tyr) + AMP + diphosphate + H(+). Functionally, catalyzes the attachment of tyrosine to tRNA(Tyr) in a two-step reaction: tyrosine is first activated by ATP to form Tyr-AMP and then transferred to the acceptor end of tRNA(Tyr). The chain is Tyrosine--tRNA ligase from Cupriavidus pinatubonensis (strain JMP 134 / LMG 1197) (Cupriavidus necator (strain JMP 134)).